Here is a 166-residue protein sequence, read N- to C-terminus: Phospholipase A2 inhibitor clone 04 (166 aa).

The first 19 residues, 1 to 19 (MRLILLSSLLLLGIFLANG), serve as a signal peptide directing secretion. Residues 46-161 (LKDAFLTVHR…CDDNRLVVCE (116 aa)) form the C-type lectin domain. 2 cysteine pairs are disulfide-bonded: Cys-83/Cys-160 and Cys-138/Cys-152. N-linked (GlcNAc...) asparagine glycosylation occurs at Asn-122.

This sequence belongs to the alpha-type phospholipase A2 inhibitor family. As to quaternary structure, homotrimer; non-covalently linked. In terms of tissue distribution, expressed by the liver.

The protein localises to the secreted. Functionally, this phospholipase A2 inhibitor binds directly phospholipase A2 in the presence or absence of calcium. In Bothrops moojeni (Lance-headed viper), this protein is Phospholipase A2 inhibitor clone 04.